A 311-amino-acid chain; its full sequence is Nuclear hormone receptor family member nhr-111 (311 aa).

Residues 39-115 (ITLCAVCGDT…KGMNKNAVQP (77 aa)) constitute a DNA-binding region (nuclear receptor). 2 NR C4-type zinc fingers span residues 42–62 (CAVC…CFGC) and 78–98 (CWNG…CKSC). In terms of domain architecture, NR LBD spans 116-311 (ERTSHSYTVE…KACEIVISFL (196 aa)).

It belongs to the nuclear hormone receptor family.

It localises to the nucleus. In terms of biological role, orphan nuclear receptor. This Caenorhabditis elegans protein is Nuclear hormone receptor family member nhr-111 (nhr-111).